The sequence spans 362 residues: Probable dual-specificity RNA methyltransferase RlmN (362 aa).

Catalysis depends on Glu105, which acts as the Proton acceptor. One can recognise a Radical SAM core domain in the interval 111–344; that stretch reads HEYGNSICVT…VTIRREQGHD (234 aa). The cysteines at positions 118 and 349 are disulfide-linked. Residues Cys125, Cys129, and Cys132 each coordinate [4Fe-4S] cluster. S-adenosyl-L-methionine-binding positions include 175–176, Ser207, 230–232, and Asn306; these read GE and SLH. Cys349 serves as the catalytic S-methylcysteine intermediate.

Belongs to the radical SAM superfamily. RlmN family. [4Fe-4S] cluster serves as cofactor.

It is found in the cytoplasm. It catalyses the reaction adenosine(2503) in 23S rRNA + 2 reduced [2Fe-2S]-[ferredoxin] + 2 S-adenosyl-L-methionine = 2-methyladenosine(2503) in 23S rRNA + 5'-deoxyadenosine + L-methionine + 2 oxidized [2Fe-2S]-[ferredoxin] + S-adenosyl-L-homocysteine. The enzyme catalyses adenosine(37) in tRNA + 2 reduced [2Fe-2S]-[ferredoxin] + 2 S-adenosyl-L-methionine = 2-methyladenosine(37) in tRNA + 5'-deoxyadenosine + L-methionine + 2 oxidized [2Fe-2S]-[ferredoxin] + S-adenosyl-L-homocysteine. Functionally, specifically methylates position 2 of adenine 2503 in 23S rRNA and position 2 of adenine 37 in tRNAs. The protein is Probable dual-specificity RNA methyltransferase RlmN of Bacillus thuringiensis subsp. konkukian (strain 97-27).